Reading from the N-terminus, the 712-residue chain is MMMTVKQESPNSTLNTSEFSSDENLKTNNSEPPKKVSKSSTGKRKYHQKSRNGCSTCKKRRVKCDEQRPVCGNCTKLKLDCGYLHEPLENILNTKKDIANNEPPSKKRKRKVSTVSAASDSESTTQQATPSLTPSPNHSQDIKTQPVIPPTNPLSALSSGLLSAGNLNNLNVAHLVNNLSGLGDLSNLASLGNLASLSNLASLAQLPIDLSNLGSLLDSPAASNIAASFLGSAAATTVPPTTNSEFKESNQRKSQTQMPPQPTVPITSMGAATTTSSHQQANMPSRSKPQPETLQSSIPATTSGSPGMSYPGCPSNSDPFGRSSDKSLPNISPNMSIPANPLSDPLTQGMRSNLNMLDLKLMFHYTSVVANTITGAGISDTNIWNCDIPKLAFEHPFLMHSILAFSATHLSRTEKGLDQCVTCHRGDALRLLREAVLNINADNTDALVASALILIMDSLANASFPSSTSPKSLPASAWIFHVKGAATILTAVWPLTEASRFYKFISVDLGDLGDIINQGVNMNKSKGIDRENSAYYTDLECHDADIADLFPVLLDSPYLITLAYLNKLHKERYKSDFILRIFAFPALLDKQFMGLLMSGDVKAMRIMRSYYKLLRSFTTEMKDKVWFLEGVSQVLPVNVEEYAGGAGGMHMMMDFLGGGPAIVDDNEIDAEITKFDPSGTLTNKLIDTDNLPSVLTSNLDLMQGDNGFMNMK.

The segment covering methionine 1–phenylalanine 19 has biased composition (polar residues). The segment at methionine 1–asparagine 52 is disordered. The span at lysine 35–serine 50 shows a compositional bias: basic residues. Residues cysteine 54–cysteine 81 constitute a DNA-binding region (zn(2)-C6 fungal-type). Disordered regions lie at residues lysine 95–proline 150 and threonine 236–leucine 342. 3 stretches are compositionally biased toward polar residues: residues serine 113 to lysine 143, arginine 252 to proline 306, and lysine 326 to isoleucine 337.

It localises to the nucleus. Functionally, transcription factor involved in the regulation of ergosterol biosynthetic genes such as ERG2 and ERG11 through direct binding to sterol response elements (SREs) in the promoters. Also binds to its own promoter on 2 cis-acting elements to promote autoregulation. Regulates sterol uptake across the plasma membrane. Acts as a major regulator of ascorbic acid-induced response. Plays a role in the triggering of pyroptosis, an inflammasome-mediated programmed cell death pathway in macrophages, allowing macrophages escaping. This Candida albicans (strain SC5314 / ATCC MYA-2876) (Yeast) protein is Sterol uptake control protein 2.